Here is a 90-residue protein sequence, read N- to C-terminus: Small ribosomal subunit protein bS16 (90 aa).

It belongs to the bacterial ribosomal protein bS16 family.

The chain is Small ribosomal subunit protein bS16 from Geobacillus thermodenitrificans (strain NG80-2).